Here is a 485-residue protein sequence, read N- to C-terminus: Probable coniferyl aldehyde dehydrogenase (485 aa).

Active-site residues include E226 and C260.

This sequence belongs to the aldehyde dehydrogenase family.

It carries out the reaction (E)-coniferaldehyde + NADP(+) + H2O = (E)-ferulate + NADPH + 2 H(+). The catalysed reaction is (E)-coniferaldehyde + NAD(+) + H2O = (E)-ferulate + NADH + 2 H(+). This Caulobacter vibrioides (strain ATCC 19089 / CIP 103742 / CB 15) (Caulobacter crescentus) protein is Probable coniferyl aldehyde dehydrogenase (calB).